Consider the following 726-residue polypeptide: Fatty acid oxidation complex subunit alpha (726 aa).

Residues 1–189 (MIYQGENLSV…KIGMVDGIVS (189 aa)) are enoyl-CoA hydratase/isomerase. Aspartate 296 provides a ligand contact to substrate. Residues 311–726 (EPVKNAAVLG…PKSSVSSPSV (416 aa)) are 3-hydroxyacyl-CoA dehydrogenase. NAD(+)-binding positions include methionine 324, aspartate 343, 400–402 (VVE), lysine 407, and serine 429. Residue histidine 450 is the For 3-hydroxyacyl-CoA dehydrogenase activity of the active site. Residue asparagine 453 participates in NAD(+) binding. Substrate contacts are provided by asparagine 500 and tyrosine 660.

In the N-terminal section; belongs to the enoyl-CoA hydratase/isomerase family. It in the C-terminal section; belongs to the 3-hydroxyacyl-CoA dehydrogenase family. As to quaternary structure, heterotetramer of two alpha chains (FadB) and two beta chains (FadA).

The catalysed reaction is a (3S)-3-hydroxyacyl-CoA + NAD(+) = a 3-oxoacyl-CoA + NADH + H(+). It carries out the reaction a (3S)-3-hydroxyacyl-CoA = a (2E)-enoyl-CoA + H2O. It catalyses the reaction a 4-saturated-(3S)-3-hydroxyacyl-CoA = a (3E)-enoyl-CoA + H2O. The enzyme catalyses (3S)-3-hydroxybutanoyl-CoA = (3R)-3-hydroxybutanoyl-CoA. The catalysed reaction is a (3Z)-enoyl-CoA = a 4-saturated (2E)-enoyl-CoA. It carries out the reaction a (3E)-enoyl-CoA = a 4-saturated (2E)-enoyl-CoA. It participates in lipid metabolism; fatty acid beta-oxidation. Its function is as follows. Involved in the aerobic and anaerobic degradation of long-chain fatty acids via beta-oxidation cycle. Catalyzes the formation of 3-oxoacyl-CoA from enoyl-CoA via L-3-hydroxyacyl-CoA. It can also use D-3-hydroxyacyl-CoA and cis-3-enoyl-CoA as substrate. The protein is Fatty acid oxidation complex subunit alpha of Aliivibrio salmonicida (strain LFI1238) (Vibrio salmonicida (strain LFI1238)).